The primary structure comprises 235 residues: Purine nucleoside phosphorylase DeoD-type (235 aa).

Histidine 4 lines the a purine D-ribonucleoside pocket. Phosphate-binding positions include glycine 20, arginine 24, arginine 43, and 87–90; that span reads RVGT. Residues 179 to 181 and 203 to 204 contribute to the a purine D-ribonucleoside site; these read EME and SD. Aspartate 204 functions as the Proton donor in the catalytic mechanism.

The protein belongs to the PNP/UDP phosphorylase family. Homohexamer; trimer of homodimers.

It carries out the reaction a purine D-ribonucleoside + phosphate = a purine nucleobase + alpha-D-ribose 1-phosphate. It catalyses the reaction a purine 2'-deoxy-D-ribonucleoside + phosphate = a purine nucleobase + 2-deoxy-alpha-D-ribose 1-phosphate. In terms of biological role, catalyzes the reversible phosphorolytic breakdown of the N-glycosidic bond in the beta-(deoxy)ribonucleoside molecules, with the formation of the corresponding free purine bases and pentose-1-phosphate. This chain is Purine nucleoside phosphorylase DeoD-type, found in Brevibacillus brevis (strain 47 / JCM 6285 / NBRC 100599).